The chain runs to 474 residues: Ubiquinol-cytochrome-c reductase complex core protein 2, mitochondrial (474 aa).

The transit peptide at 1 to 42 directs the protein to the mitochondrion; that stretch reads MKSVVRSKGTQALFRRFSSALGDSINPNQVGVGDNVIRVNGR.

The protein belongs to the peptidase M16 family. UQCRC2/QCR2 subfamily. Component of the ubiquinol-cytochrome c oxidoreductase (cytochrome b-c1 complex, complex III, CIII), a multisubunit enzyme composed of 3 respiratory subunits cytochrome b, cytochrome c1 and Rieske protein, 2 core protein subunits, and additional low-molecular weight protein subunits. The complex exists as an obligatory dimer and forms supercomplexes (SCs) in the inner mitochondrial membrane with cytochrome c oxidase (complex IV, CIV).

It is found in the mitochondrion inner membrane. In terms of biological role, component of the ubiquinol-cytochrome c oxidoreductase, a multisubunit transmembrane complex that is part of the mitochondrial electron transport chain which drives oxidative phosphorylation. The respiratory chain contains 3 multisubunit complexes succinate dehydrogenase (complex II, CII), ubiquinol-cytochrome c oxidoreductase (cytochrome b-c1 complex, complex III, CIII) and cytochrome c oxidase (complex IV, CIV), that cooperate to transfer electrons derived from NADH and succinate to molecular oxygen, creating an electrochemical gradient over the inner membrane that drives transmembrane transport and the ATP synthase. The cytochrome b-c1 complex catalyzes electron transfer from ubiquinol to cytochrome c, linking this redox reaction to translocation of protons across the mitochondrial inner membrane, with protons being carried across the membrane as hydrogens on the quinol. In the process called Q cycle, 2 protons are consumed from the matrix, 4 protons are released into the intermembrane space and 2 electrons are passed to cytochrome c. The protein is Ubiquinol-cytochrome-c reductase complex core protein 2, mitochondrial of Euglena gracilis.